Consider the following 227-residue polypeptide: Cytochrome c oxidase subunit 2 (227 aa).

Topologically, residues 1-14 (MAHPAQLGLQDATS) are mitochondrial intermembrane. A helical membrane pass occupies residues 15–45 (PVMEELITFHDHALMAMSLISLLVLYALFST). The Mitochondrial matrix segment spans residues 46–59 (LTTKMTNTNITDAQ). The helical transmembrane segment at 60–87 (EMETIWTILPAIILVLIAFPSLRILYMT) threads the bilayer. Over 88 to 227 (DEVNNPSFTI…IFEMGPVFTL (140 aa)) the chain is Mitochondrial intermembrane. Cu cation-binding residues include His161, Cys196, Glu198, Cys200, His204, and Met207. Glu198 is a binding site for Mg(2+).

This sequence belongs to the cytochrome c oxidase subunit 2 family. In terms of assembly, component of the cytochrome c oxidase (complex IV, CIV), a multisubunit enzyme composed of 14 subunits. The complex is composed of a catalytic core of 3 subunits MT-CO1, MT-CO2 and MT-CO3, encoded in the mitochondrial DNA, and 11 supernumerary subunits COX4I, COX5A, COX5B, COX6A, COX6B, COX6C, COX7A, COX7B, COX7C, COX8 and NDUFA4, which are encoded in the nuclear genome. The complex exists as a monomer or a dimer and forms supercomplexes (SCs) in the inner mitochondrial membrane with NADH-ubiquinone oxidoreductase (complex I, CI) and ubiquinol-cytochrome c oxidoreductase (cytochrome b-c1 complex, complex III, CIII), resulting in different assemblies (supercomplex SCI(1)III(2)IV(1) and megacomplex MCI(2)III(2)IV(2)). Found in a complex with TMEM177, COA6, COX18, COX20, SCO1 and SCO2. Interacts with TMEM177 in a COX20-dependent manner. Interacts with COX20. Interacts with COX16. Cu cation serves as cofactor.

The protein resides in the mitochondrion inner membrane. The enzyme catalyses 4 Fe(II)-[cytochrome c] + O2 + 8 H(+)(in) = 4 Fe(III)-[cytochrome c] + 2 H2O + 4 H(+)(out). In terms of biological role, component of the cytochrome c oxidase, the last enzyme in the mitochondrial electron transport chain which drives oxidative phosphorylation. The respiratory chain contains 3 multisubunit complexes succinate dehydrogenase (complex II, CII), ubiquinol-cytochrome c oxidoreductase (cytochrome b-c1 complex, complex III, CIII) and cytochrome c oxidase (complex IV, CIV), that cooperate to transfer electrons derived from NADH and succinate to molecular oxygen, creating an electrochemical gradient over the inner membrane that drives transmembrane transport and the ATP synthase. Cytochrome c oxidase is the component of the respiratory chain that catalyzes the reduction of oxygen to water. Electrons originating from reduced cytochrome c in the intermembrane space (IMS) are transferred via the dinuclear copper A center (CU(A)) of subunit 2 and heme A of subunit 1 to the active site in subunit 1, a binuclear center (BNC) formed by heme A3 and copper B (CU(B)). The BNC reduces molecular oxygen to 2 water molecules using 4 electrons from cytochrome c in the IMS and 4 protons from the mitochondrial matrix. This Mandrillus leucophaeus (Drill) protein is Cytochrome c oxidase subunit 2 (MT-CO2).